The following is a 181-amino-acid chain: Peptidyl-tRNA hydrolase (181 aa).

Tyrosine 14 provides a ligand contact to tRNA. Catalysis depends on histidine 19, which acts as the Proton acceptor. TRNA is bound by residues tyrosine 62, asparagine 64, and asparagine 108.

It belongs to the PTH family. Monomer.

It is found in the cytoplasm. The catalysed reaction is an N-acyl-L-alpha-aminoacyl-tRNA + H2O = an N-acyl-L-amino acid + a tRNA + H(+). Hydrolyzes ribosome-free peptidyl-tRNAs (with 1 or more amino acids incorporated), which drop off the ribosome during protein synthesis, or as a result of ribosome stalling. In terms of biological role, catalyzes the release of premature peptidyl moieties from peptidyl-tRNA molecules trapped in stalled 50S ribosomal subunits, and thus maintains levels of free tRNAs and 50S ribosomes. This chain is Peptidyl-tRNA hydrolase, found in Campylobacter jejuni (strain RM1221).